We begin with the raw amino-acid sequence, 298 residues long: GTP cyclohydrolase FolE2 (298 aa).

Belongs to the GTP cyclohydrolase IV family.

It carries out the reaction GTP + H2O = 7,8-dihydroneopterin 3'-triphosphate + formate + H(+). It participates in cofactor biosynthesis; 7,8-dihydroneopterin triphosphate biosynthesis; 7,8-dihydroneopterin triphosphate from GTP: step 1/1. In terms of biological role, converts GTP to 7,8-dihydroneopterin triphosphate. In Azotobacter vinelandii (strain DJ / ATCC BAA-1303), this protein is GTP cyclohydrolase FolE2.